Here is a 118-residue protein sequence, read N- to C-terminus: Small ribosomal subunit protein uS13 (118 aa).

The interval 94 to 118 (SLPLRGQRTKTNARTRKGPRKAIKK) is disordered.

Belongs to the universal ribosomal protein uS13 family. In terms of assembly, part of the 30S ribosomal subunit. Forms a loose heterodimer with protein S19. Forms two bridges to the 50S subunit in the 70S ribosome.

Functionally, located at the top of the head of the 30S subunit, it contacts several helices of the 16S rRNA. In the 70S ribosome it contacts the 23S rRNA (bridge B1a) and protein L5 of the 50S subunit (bridge B1b), connecting the 2 subunits; these bridges are implicated in subunit movement. Contacts the tRNAs in the A and P-sites. The polypeptide is Small ribosomal subunit protein uS13 (Pseudoalteromonas atlantica (strain T6c / ATCC BAA-1087)).